The sequence spans 515 residues: Ent-isokaurene C2/C3-hydroxylase (515 aa).

The helical transmembrane segment at 5–25 (LILDLCLSALFVVVLSKLVSS) threads the bilayer. Cysteine 452 is a heme binding site.

It belongs to the cytochrome P450 family. Heme is required as a cofactor.

The protein localises to the membrane. The catalysed reaction is ent-isokaurene + 2 reduced [NADPH--hemoprotein reductase] + 2 O2 = ent-isokaurene-2beta,3beta-diol + 2 oxidized [NADPH--hemoprotein reductase] + 2 H2O + 2 H(+). Enzyme of the diterpenoid metabolism involved in the biosynthesis of antibacterial oryzalides such as phytocassane. The chain is Ent-isokaurene C2/C3-hydroxylase (CYP71Z6) from Oryza sativa subsp. japonica (Rice).